A 224-amino-acid polypeptide reads, in one-letter code: MGALYNEDYDATDMTETRLLAIPLQAYVYRTFSNVMRSASEHLDDKYAQEAHEESETIRAHWEALETRYEVPDWSKEDFDVSEGITNVDTAVRLAESAERFVRQTNLELSANQLLRLLHYRSMQERQWELETRSYLNDLINLVEDPADQKRIDDVLMPWFANKPFMVELTTEELTQLRKKIEDAIKNTNVQKSARQALKKYPLLSTFSSNGSRRGRSNKHRVVH.

In terms of biological role, plasmid partition require REP1, REP2, and a cis-acting DNA sequence (known as STB). REP1 may act by intercalating in the yeast nuclear matrix and binding STB either directly or via REP2. This Lachancea fermentati (Zygosaccharomyces fermentati) protein is Trans-acting factor B (B).